We begin with the raw amino-acid sequence, 430 residues long: uncharacterized protein (430 aa).

Helical transmembrane passes span 36–56, 69–89, 100–122, 126–148, 160–180, 197–217, 253–273, 285–305, 317–337, 340–360, 384–404, and 406–426; these read LFVV…GVTV, AFAG…ALIV, TGLS…AAII, FLLF…ARYA, TAVS…PSLV, GPFI…FIML, IIVG…IMTM, LGAV…PSLV, AMAI…AFAP, SMIL…FGLI, VLIA…VAGS, and YLAL…VVVW.

The protein belongs to the major facilitator superfamily.

It localises to the cell membrane. This is an uncharacterized protein from Bacillus subtilis (strain 168).